The sequence spans 226 residues: Insulin-like growth factor-binding protein 6 (226 aa).

The N-terminal stretch at 1–25 is a signal peptide; that stretch reads MTWDGLPTQPLLMLLMLLFAAGSES. In terms of domain architecture, IGFBP N-terminal spans 26-99; the sequence is ALAGCPGCGP…LIGQGRCQRA (74 aa). Intrachain disulfides connect Cys30/Cys33, Cys49/Cys55, Cys63/Cys76, and Cys70/Cys96. Residues 92–148 are disordered; it reads GQGRCQRARGPSEETTKESKPHGGASRPRDRDRQKNPRTSAAPIRPSPVQDGEMGPC. The span at 101-126 shows a compositional bias: basic and acidic residues; that stretch reads GPSEETTKESKPHGGASRPRDRDRQK. Residues 145-220 enclose the Thyroglobulin type-1 domain; the sequence is MGPCRRHLDS…SPDGQGSSQC (76 aa). 3 cysteine pairs are disulfide-bonded: Cys148–Cys176, Cys187–Cys198, and Cys200–Cys220. The tract at residues 205-226 is disordered; the sequence is GQPLPVSPDGQGSSQCSARSSG. Polar residues predominate over residues 214–226; that stretch reads GQGSSQCSARSSG.

As to quaternary structure, interacts (via C-terminal domain) with PHB2. O-glycosylated.

Its subcellular location is the secreted. Its function is as follows. IGF-binding proteins prolong the half-life of the IGFs and have been shown to either inhibit or stimulate the growth promoting effects of the IGFs on cell culture. They alter the interaction of IGFs with their cell surface receptors. Activates the MAPK signaling pathway and induces cell migration. The chain is Insulin-like growth factor-binding protein 6 (Igfbp6) from Rattus norvegicus (Rat).